We begin with the raw amino-acid sequence, 71 residues long: uncharacterized protein (71 aa).

This sequence belongs to the ycf40 family.

It localises to the plastid. The protein resides in the chloroplast. This is an uncharacterized protein from Pyropia yezoensis (Susabi-nori).